The primary structure comprises 444 residues: Orexin receptor type 2 (444 aa).

Positions 1 to 10 (MSGTKLEDSP) are enriched in basic and acidic residues. Residues 1–20 (MSGTKLEDSPPCRNWSSASE) form a disordered region. At 1 to 54 (MSGTKLEDSPPCRNWSSASELNETQEPFLNPTDYDDEEFLRYLWREYLHPKEYE) the chain is on the extracellular side. Asparagine 14 and asparagine 22 each carry an N-linked (GlcNAc...) asparagine glycan. A required for response to orexin-A region spans residues 33 to 49 (DYDDEEFLRYLWREYLH). A helical membrane pass occupies residues 55 to 75 (WVLIAGYIIVFVVALIGNVLV). Topologically, residues 76-88 (CVAVWKNHHMRTV) are cytoplasmic. A helical transmembrane segment spans residues 89–110 (TNYFIVNLSLADVLVTITCLPA). Over 111–127 (TLVVDITETWFFGQSLC) the chain is Extracellular. Residues cysteine 127 and cysteine 210 are joined by a disulfide bond. Residues 128 to 150 (KVIPYLQTVSVSVSVLTLSCIAL) form a helical membrane-spanning segment. Over 151–170 (DRWYAICHPLMFKSTAKRAR) the chain is Cytoplasmic. The chain crosses the membrane as a helical span at residues 171 to 191 (NSIVIIWIVSCIIMIPQAIVM). Topologically, residues 192-222 (ECSTVFPGLANKTTLFTVCDERWGGEIYPKM) are extracellular. Asparagine 202 is a glycosylation site (N-linked (GlcNAc...) asparagine). A helical membrane pass occupies residues 223–243 (YHICFFLVTYMAPLCLMVLAY). At 244–304 (LQIFRKLWCR…QIRARRKTAR (61 aa)) the chain is on the cytoplasmic side. A helical transmembrane segment spans residues 305-326 (MLMIVLLVFAICYLPISILNVL). Residue asparagine 324 coordinates suvorexant. At 327–342 (KRVFGMFAHTEDRETV) the chain is on the extracellular side. A helical transmembrane segment spans residues 343–366 (YAWFTFSHWLVYANSAANPIIYNF). Residues 367–444 (LSGKFREEFK…ANGAGPLQNW (78 aa)) lie on the Cytoplasmic side of the membrane.

It belongs to the G-protein coupled receptor 1 family.

The protein resides in the cell membrane. In terms of biological role, nonselective, high-affinity receptor for both orexin-A and orexin-B neuropeptides. Triggers an increase in cytoplasmic Ca(2+) levels in response to orexin-A binding. The polypeptide is Orexin receptor type 2 (HCRTR2) (Homo sapiens (Human)).